A 118-amino-acid polypeptide reads, in one-letter code: Large ribosomal subunit protein uL18 (118 aa).

This sequence belongs to the universal ribosomal protein uL18 family. In terms of assembly, part of the 50S ribosomal subunit; part of the 5S rRNA/L5/L18/L25 subcomplex. Contacts the 5S and 23S rRNAs.

In terms of biological role, this is one of the proteins that bind and probably mediate the attachment of the 5S RNA into the large ribosomal subunit, where it forms part of the central protuberance. The chain is Large ribosomal subunit protein uL18 from Campylobacter jejuni subsp. doylei (strain ATCC BAA-1458 / RM4099 / 269.97).